The following is a 246-amino-acid chain: MTNNAAAPLYSLRGLPLIGWRDMPHALNYLFADGQLKQGTLVAINAEKLLTAEDNPDVRALIAAAEFKYADGISVVRSIRKKFPQAQVSRVAGADLWEALMARAGKEGTPVFLIGGKPEVLAQTEEKLRAQWNVNIVGSQDGYFTPEQSQALFARIHASGAQIVTVAMGSPKQEIVMHDCREVHPHALYMGVGGTYDVFTGHVKRAPKIWQNLGLEWLYRLLSQPSRITRQMRLLRYLRWHYTDDL.

This sequence belongs to the glycosyltransferase 26 family.

It carries out the reaction UDP-N-acetyl-alpha-D-mannosaminouronate + N-acetyl-alpha-D-glucosaminyl-di-trans,octa-cis-undecaprenyl diphosphate = beta-D-ManNAcA-(1-&gt;4)-alpha-D-GlcNAc-di-trans,octa-cis-undecaprenyl diphosphate + UDP + H(+). It participates in bacterial outer membrane biogenesis; enterobacterial common antigen biosynthesis. Its function is as follows. Catalyzes the synthesis of Und-PP-GlcNAc-ManNAcA (Lipid II), the second lipid-linked intermediate involved in enterobacterial common antigen (ECA) synthesis. This is UDP-N-acetyl-D-mannosaminuronic acid transferase from Salmonella arizonae (strain ATCC BAA-731 / CDC346-86 / RSK2980).